We begin with the raw amino-acid sequence, 274 residues long: 5'-nucleotidase SurE (274 aa).

Asp12, Asp13, Ser45, and Asn103 together coordinate a divalent metal cation.

It belongs to the SurE nucleotidase family. A divalent metal cation serves as cofactor.

It is found in the cytoplasm. The catalysed reaction is a ribonucleoside 5'-phosphate + H2O = a ribonucleoside + phosphate. Its function is as follows. Nucleotidase that shows phosphatase activity on nucleoside 5'-monophosphates. This Chlamydia felis (strain Fe/C-56) (Chlamydophila felis) protein is 5'-nucleotidase SurE.